The sequence spans 6713 residues: Extracellular matrix-binding protein EbhA (6713 aa).

FIVAR domains follow at residues Met-1–Ala-58, Ala-126–Ala-184, Ala-252–Ala-310, Gln-378–Ala-436, Ala-504–Ala-562, Ala-630–Ile-688, Ala-756–Ala-814, Ala-882–Ala-940, Ala-1008–Met-1066, Ala-1134–Ala-1192, Ala-1260–Ala-1318, Ala-1386–Ala-1444, Ala-1512–Ala-1570, Ala-1638–Ala-1696, Ala-1764–Ala-1822, Ala-1890–Ala-1948, Ala-2142–Lys-2200, Ala-2268–Ala-2325, Ala-2393–Ala-2451, Ala-2519–Ala-2577, Ala-2645–Ala-2703, Ala-2771–Ala-2829, Ala-2897–Ala-2955, Ala-3023–Ala-3081, Ala-3149–Ala-3207, Ala-3275–Ala-3333, Ala-3401–Ala-3459, Ala-3527–Ala-3585, Ala-3653–Ala-3711, Ala-3779–Ala-3837, Ala-3905–Ala-3963, Ala-4031–Ala-4089, Ala-4157–Glu-4218, Ala-4283–Ala-4341, Ala-4409–Ala-4467, Ala-4535–Val-4592, Leu-4660–Ala-4718, Ala-4786–Ala-4844, Ala-4912–Leu-4970, Ala-5038–Leu-5096, Ala-5164–Ala-5222, Ser-5290–Ala-5344, Ala-5412–Leu-5471, and Ala-5666–Ala-5722. The helical transmembrane segment at Val-6518–Ala-6540 threads the bilayer. Residues Arg-6616–Lys-6713 form a disordered region. Composition is skewed to basic and acidic residues over residues Thr-6631–His-6641 and Gln-6680–Ser-6690. Positions Thr-6695–Lys-6713 are enriched in basic residues.

Its subcellular location is the cell membrane. The polypeptide is Extracellular matrix-binding protein EbhA (ebhA) (Staphylococcus aureus (strain Mu3 / ATCC 700698)).